The following is a 427-amino-acid chain: Serine hydroxymethyltransferase (427 aa).

(6S)-5,6,7,8-tetrahydrofolate is bound by residues Leu124 and 128 to 130 (GHL). Lys233 is modified (N6-(pyridoxal phosphate)lysine).

The protein belongs to the SHMT family. As to quaternary structure, homodimer. Pyridoxal 5'-phosphate is required as a cofactor.

The protein resides in the cytoplasm. The enzyme catalyses (6R)-5,10-methylene-5,6,7,8-tetrahydrofolate + glycine + H2O = (6S)-5,6,7,8-tetrahydrofolate + L-serine. It functions in the pathway one-carbon metabolism; tetrahydrofolate interconversion. The protein operates within amino-acid biosynthesis; glycine biosynthesis; glycine from L-serine: step 1/1. Functionally, catalyzes the reversible interconversion of serine and glycine with tetrahydrofolate (THF) serving as the one-carbon carrier. This reaction serves as the major source of one-carbon groups required for the biosynthesis of purines, thymidylate, methionine, and other important biomolecules. Also exhibits THF-independent aldolase activity toward beta-hydroxyamino acids, producing glycine and aldehydes, via a retro-aldol mechanism. This Acidothermus cellulolyticus (strain ATCC 43068 / DSM 8971 / 11B) protein is Serine hydroxymethyltransferase.